Here is a 252-residue protein sequence, read N- to C-terminus: Probable transcriptional regulatory protein DSY2470 (252 aa).

It belongs to the TACO1 family.

The protein localises to the cytoplasm. This chain is Probable transcriptional regulatory protein DSY2470, found in Desulfitobacterium hafniense (strain Y51).